The chain runs to 382 residues: D-galactonate dehydratase (382 aa).

Asp-183 serves as a coordination point for Mg(2+). The Proton donor role is filled by His-185. 2 residues coordinate Mg(2+): Glu-209 and Glu-235. His-285 functions as the Proton acceptor in the catalytic mechanism. The interval 361-382 is disordered; it reads NENPPDWRNPVWRHSDGSIAEW.

This sequence belongs to the mandelate racemase/muconate lactonizing enzyme family. GalD subfamily. The cofactor is Mg(2+).

The catalysed reaction is D-galactonate = 2-dehydro-3-deoxy-D-galactonate + H2O. Its pathway is carbohydrate acid metabolism; D-galactonate degradation; D-glyceraldehyde 3-phosphate and pyruvate from D-galactonate: step 1/3. Catalyzes the dehydration of D-galactonate to 2-keto-3-deoxy-D-galactonate. The sequence is that of D-galactonate dehydratase from Xanthomonas oryzae pv. oryzae (strain MAFF 311018).